The following is a 956-amino-acid chain: DNA replication helicase (956 aa).

120 to 127 (GTAGAGKT) lines the ATP pocket. The disordered stretch occupies residues 658 to 694 (PINNHVDADSSQGGQSVPVSQRMEHGQEETHDIPCLS). The segment covering 667–678 (SSQGGQSVPVSQ) has biased composition (low complexity). The span at 679 to 694 (RMEHGQEETHDIPCLS) shows a compositional bias: basic and acidic residues.

Belongs to the herpesviridae helicase family. As to quaternary structure, associates with the primase and the primase-associated factor to form the helicase-primase complex.

Its subcellular location is the host nucleus. Component of the helicase/primase complex. Unwinds the DNA at the replication forks and generates single-stranded DNA for both leading and lagging strand synthesis. The primase synthesizes short RNA primers on the lagging strand that the polymerase elongates using dNTPs. Possesses helicase-like motifs and therefore may act as the helicase subunit of the complex. The protein is DNA replication helicase of Human cytomegalovirus (strain Merlin) (HHV-5).